Reading from the N-terminus, the 179-residue chain is Coiled-coil domain-containing protein 32 (179 aa).

Positions 75-98 form a coiled coil; that stretch reads EVYLASLEKKLRRIKGLNEEVTSK. The disordered stretch occupies residues 157–179; the sequence is FLIPPESQAEKPEARDEPAAAEQ. The segment covering 164–179 has biased composition (basic and acidic residues); sequence QAEKPEARDEPAAAEQ.

In terms of assembly, interacts with AP2S1; the interaction is direct and mediates association with adaptor protein complex 2 (AP-2).

It is found in the membrane. The protein localises to the coated pit. Functionally, regulates clathrin-mediated endocytsois of cargos such as transferrin probably through the association and modulation of adaptor protein complex 2 (AP-2). Has a role in ciliogenesis. Required for proper cephalic and left/right axis development. The sequence is that of Coiled-coil domain-containing protein 32 (Ccdc32) from Rattus norvegicus (Rat).